The primary structure comprises 542 residues: MARYIFITGGVVSSLGKGLASAALGALLQARGYKVRLRKLDPYLNLDPGTMSPYQHGEVFVTDDGAETDLDLGHYERFTGRPATRQDNITTGRIYQDILTKERRGDYLGATIQVIPHVTNAIKDFILDGNDGYDFVLCEIGGTVGDIEGLPFFEAIRQIKNDLPRGHAVYVHLTLLPFIPSAGELKTKPTQHSVKELRSIGIQPDILLCRTDRTIPAEERRKLGLFCNVRESAVIEARDADNIYAVPEVYHAAGLDDEVLAAFGLEAPAPDLRSWHEINARVHNPEGQVTIAIVGKYTGMKDAYKSLIEALSHGGIANKVKVKLDWIESEVFENEDAAPFLEHVDGILVPGGFGQRGAEGKIKAAQFARERHVPYFGICFGMQMAVIEAARNLVGIPSANSTEFGPTSEPLVGLMTEWLRGNELEKRSRAGDLGGTMRLGAYPAALKRGSRVSGIYGGALEISERHRHRYEVNTAYKDRLEQHGLRFSGLSPDGVLPEIVEYEDHPWFIGVQYHPELKSRPFEPHPLFASFIQAAVVQSRLV.

Residues 1 to 265 (MARYIFITGG…DDEVLAAFGL (265 aa)) form an amidoligase domain region. Ser-13 is a binding site for CTP. Ser-13 serves as a coordination point for UTP. An ATP-binding site is contributed by 14–19 (SLGKGL). Tyr-54 contributes to the L-glutamine binding site. ATP is bound at residue Asp-71. Mg(2+) contacts are provided by Asp-71 and Glu-139. CTP-binding positions include 146–148 (DIE), 186–191 (KTKPTQ), and Lys-222. Residues 186–191 (KTKPTQ) and Lys-222 contribute to the UTP site. 238-240 (RDA) is an ATP binding site. In terms of domain architecture, Glutamine amidotransferase type-1 spans 290 to 541 (TIAIVGKYTG…IQAAVVQSRL (252 aa)). Residue Gly-352 participates in L-glutamine binding. Catalysis depends on Cys-379, which acts as the Nucleophile; for glutamine hydrolysis. L-glutamine-binding positions include 380–383 (FGMQ), Glu-403, and Arg-469. Catalysis depends on residues His-514 and Glu-516.

It belongs to the CTP synthase family. In terms of assembly, homotetramer.

The catalysed reaction is UTP + L-glutamine + ATP + H2O = CTP + L-glutamate + ADP + phosphate + 2 H(+). It carries out the reaction L-glutamine + H2O = L-glutamate + NH4(+). The enzyme catalyses UTP + NH4(+) + ATP = CTP + ADP + phosphate + 2 H(+). It participates in pyrimidine metabolism; CTP biosynthesis via de novo pathway; CTP from UDP: step 2/2. Allosterically activated by GTP, when glutamine is the substrate; GTP has no effect on the reaction when ammonia is the substrate. The allosteric effector GTP functions by stabilizing the protein conformation that binds the tetrahedral intermediate(s) formed during glutamine hydrolysis. Inhibited by the product CTP, via allosteric rather than competitive inhibition. Functionally, catalyzes the ATP-dependent amination of UTP to CTP with either L-glutamine or ammonia as the source of nitrogen. Regulates intracellular CTP levels through interactions with the four ribonucleotide triphosphates. The polypeptide is CTP synthase (Nitrobacter hamburgensis (strain DSM 10229 / NCIMB 13809 / X14)).